The sequence spans 224 residues: Zinc finger protein 22 (224 aa).

Positions 1-34 (MRLAKPKAGISRSSSQGKAYENKRKTGRQRQKWG) are disordered. 2 positions are modified to N6-acetyllysine: lysine 18 and lysine 23. Serine 49 carries the post-translational modification Phosphoserine. 5 C2H2-type zinc fingers span residues 55 to 77 (YKCT…QKIH), 83 to 105 (HKCA…RRIH), 111 to 133 (YKCD…QRIH), 139 to 161 (YQCD…QRTH), and 167 to 189 (YQCS…MKVH).

Belongs to the krueppel C2H2-type zinc-finger protein family. In the embryo, expressed in developing craniofacial structures including dental epithelium of maxillary molar tooth organs, tongue epithelium and muscle, and craniofacial bone osteoblasts. In the adult, expressed in mesoderm-derived tissues such as skeletal muscle, heart, kidney and liver. Intermediate expression in spleen, thymus and brain. Low levels in endoderm-derived tissues such as intestine and colon.

The protein resides in the nucleus. Its function is as follows. Binds DNA through the consensus sequence 5'-CAATG-3'. May be involved in transcriptional regulation and may play a role in tooth formation. This is Zinc finger protein 22 (ZNF22) from Homo sapiens (Human).